The primary structure comprises 218 residues: Probable transaldolase (218 aa).

The active-site Schiff-base intermediate with substrate is the Lys-87.

The protein belongs to the transaldolase family. Type 3B subfamily.

It is found in the cytoplasm. It catalyses the reaction D-sedoheptulose 7-phosphate + D-glyceraldehyde 3-phosphate = D-erythrose 4-phosphate + beta-D-fructose 6-phosphate. It participates in carbohydrate degradation; pentose phosphate pathway; D-glyceraldehyde 3-phosphate and beta-D-fructose 6-phosphate from D-ribose 5-phosphate and D-xylulose 5-phosphate (non-oxidative stage): step 2/3. Its function is as follows. Transaldolase is important for the balance of metabolites in the pentose-phosphate pathway. This is Probable transaldolase from Bacteroides fragilis (strain ATCC 25285 / DSM 2151 / CCUG 4856 / JCM 11019 / LMG 10263 / NCTC 9343 / Onslow / VPI 2553 / EN-2).